An 804-amino-acid chain; its full sequence is Leucine--tRNA ligase (804 aa).

Residues 39–50 (PFPSGKGLHVGH) carry the 'HIGH' region motif. Residues 573 to 577 (KMSKS) carry the 'KMSKS' region motif. K576 contacts ATP.

It belongs to the class-I aminoacyl-tRNA synthetase family.

Its subcellular location is the cytoplasm. It carries out the reaction tRNA(Leu) + L-leucine + ATP = L-leucyl-tRNA(Leu) + AMP + diphosphate. The protein is Leucine--tRNA ligase of Lactobacillus acidophilus (strain ATCC 700396 / NCK56 / N2 / NCFM).